The chain runs to 337 residues: Anthranilate phosphoribosyltransferase (337 aa).

5-phospho-alpha-D-ribose 1-diphosphate contacts are provided by residues Gly-80, 83-84 (GD), Thr-88, 90-93 (NIST), 108-116 (KHGNRAVSS), and Ser-120. Gly-80 provides a ligand contact to anthranilate. Ser-92 is a binding site for Mg(2+). Asn-111 contacts anthranilate. Position 166 (Arg-166) interacts with anthranilate. 2 residues coordinate Mg(2+): Asp-224 and Glu-225.

This sequence belongs to the anthranilate phosphoribosyltransferase family. In terms of assembly, homodimer. Mg(2+) serves as cofactor.

The catalysed reaction is N-(5-phospho-beta-D-ribosyl)anthranilate + diphosphate = 5-phospho-alpha-D-ribose 1-diphosphate + anthranilate. It participates in amino-acid biosynthesis; L-tryptophan biosynthesis; L-tryptophan from chorismate: step 2/5. Functionally, catalyzes the transfer of the phosphoribosyl group of 5-phosphorylribose-1-pyrophosphate (PRPP) to anthranilate to yield N-(5'-phosphoribosyl)-anthranilate (PRA). The sequence is that of Anthranilate phosphoribosyltransferase from Anaeromyxobacter sp. (strain K).